Here is a 228-residue protein sequence, read N- to C-terminus: 30 kDa heat shock protein (228 aa).

3 disordered regions span residues 34 to 53 (EVQG…PTRT), 117 to 136 (KGEP…DVDE), and 144 to 174 (TATG…APAE). Residues 49–228 (QPTRTFSPKF…KHETIRIAIN (180 aa)) enclose the sHSP domain. Over residues 144-158 (TATGANNQNNQQVAQ) the composition is skewed to low complexity.

This sequence belongs to the small heat shock protein (HSP20) family.

It is found in the cytoplasm. The protein is 30 kDa heat shock protein (hsp30) of Neurospora crassa (strain ATCC 24698 / 74-OR23-1A / CBS 708.71 / DSM 1257 / FGSC 987).